The sequence spans 524 residues: Putative UDP-glucuronosyltransferase ugt-56 (524 aa).

A signal peptide spans 1–20 (MLWAFIVWLGALCIYGSAFD). N-linked (GlcNAc...) asparagine glycans are attached at residues Asn-125, Asn-277, and Asn-335. A helical membrane pass occupies residues 488-508 (LIDSSIALVFMLFIFVFVNHF).

This sequence belongs to the UDP-glycosyltransferase family.

The protein resides in the membrane. The catalysed reaction is glucuronate acceptor + UDP-alpha-D-glucuronate = acceptor beta-D-glucuronoside + UDP + H(+). This is Putative UDP-glucuronosyltransferase ugt-56 (ugt-56) from Caenorhabditis elegans.